Reading from the N-terminus, the 313-residue chain is Porphobilinogen deaminase (313 aa).

S-(dipyrrolylmethanemethyl)cysteine is present on cysteine 242.

Belongs to the HMBS family. Monomer. Dipyrromethane serves as cofactor.

It carries out the reaction 4 porphobilinogen + H2O = hydroxymethylbilane + 4 NH4(+). Its pathway is porphyrin-containing compound metabolism; protoporphyrin-IX biosynthesis; coproporphyrinogen-III from 5-aminolevulinate: step 2/4. In terms of biological role, tetrapolymerization of the monopyrrole PBG into the hydroxymethylbilane pre-uroporphyrinogen in several discrete steps. The sequence is that of Porphobilinogen deaminase from Klebsiella pneumoniae (strain 342).